Consider the following 148-residue polypeptide: Deoxyuridine 5'-triphosphate nucleotidohydrolase (148 aa).

Residues 67–69, Asn-80, 84–86, and Met-94 each bind substrate; these read RSG and LID.

Belongs to the dUTPase family. Mg(2+) is required as a cofactor.

The enzyme catalyses dUTP + H2O = dUMP + diphosphate + H(+). It participates in pyrimidine metabolism; dUMP biosynthesis; dUMP from dCTP (dUTP route): step 2/2. In terms of biological role, this enzyme is involved in nucleotide metabolism: it produces dUMP, the immediate precursor of thymidine nucleotides and it decreases the intracellular concentration of dUTP so that uracil cannot be incorporated into DNA. The polypeptide is Deoxyuridine 5'-triphosphate nucleotidohydrolase (Paraburkholderia phymatum (strain DSM 17167 / CIP 108236 / LMG 21445 / STM815) (Burkholderia phymatum)).